Consider the following 232-residue polypeptide: 5'-methylthioadenosine/S-adenosylhomocysteine nucleosidase (232 aa).

The active-site Proton acceptor is Glu12. Substrate-binding positions include Gly78, Ile152, and 173–174 (ME). Catalysis depends on Asp197, which acts as the Proton donor.

The protein belongs to the PNP/UDP phosphorylase family. MtnN subfamily. Homodimer.

It catalyses the reaction S-adenosyl-L-homocysteine + H2O = S-(5-deoxy-D-ribos-5-yl)-L-homocysteine + adenine. The catalysed reaction is S-methyl-5'-thioadenosine + H2O = 5-(methylsulfanyl)-D-ribose + adenine. The enzyme catalyses 5'-deoxyadenosine + H2O = 5-deoxy-D-ribose + adenine. The protein operates within amino-acid biosynthesis; L-methionine biosynthesis via salvage pathway; S-methyl-5-thio-alpha-D-ribose 1-phosphate from S-methyl-5'-thioadenosine (hydrolase route): step 1/2. Its function is as follows. Catalyzes the irreversible cleavage of the glycosidic bond in both 5'-methylthioadenosine (MTA) and S-adenosylhomocysteine (SAH/AdoHcy) to adenine and the corresponding thioribose, 5'-methylthioribose and S-ribosylhomocysteine, respectively. Also cleaves 5'-deoxyadenosine, a toxic by-product of radical S-adenosylmethionine (SAM) enzymes, into 5-deoxyribose and adenine. Thus, is required for in vivo function of the radical SAM enzymes biotin synthase and lipoic acid synthase, that are inhibited by 5'-deoxyadenosine accumulation. In Enterobacter sp. (strain 638), this protein is 5'-methylthioadenosine/S-adenosylhomocysteine nucleosidase.